The following is a 92-amino-acid chain: Alpha-conotoxin-like Mi20.2 (92 aa).

The signal sequence occupies residues 1–24; it reads MPKLEMMLLVLLILPLSSFSAAGE. A propeptide spanning residues 25 to 45 is cleaved from the precursor; that stretch reads QVVQGDQRSDGLARYLQRGGR. Glu-49 carries the post-translational modification 4-carboxyglutamate. Pro-55 is modified (4-hydroxyproline). Intrachain disulfides connect Cys-63/Cys-72, Cys-68/Cys-80, Cys-73/Cys-90, and Cys-78/Cys-92.

Belongs to the conotoxin D superfamily. Hetero-, homo- or pseudo-homodimer (identical sequence, different post-translational modifications). As to expression, expressed by the venom duct.

It localises to the secreted. Functionally, alpha-conotoxins act on postsynaptic membranes, they bind to the nicotinic acetylcholine receptors (nAChR) and thus inhibit them. Through its two C-terminal domains, this homodimeric protein would bind to two nAChR allosteric sites, located outside the nAChR C-loop of the principal binding face and at the adjacent binding interface in a clockwise direction. This toxin specifically blocks mammalian neuronal nAChR of the alpha-7/CHRNA7, alpha-3-beta-2/CHRNA3-CHRNB2 and alpha-4-beta-2/CHRNA4-CHRNB2 subtypes. This is Alpha-conotoxin-like Mi20.2 from Conus miles (Soldier cone).